We begin with the raw amino-acid sequence, 101 residues long: Apolipoprotein C-II (101 aa).

A signal peptide spans 1–22 (MGTRYLLVLLLVLLVLGFEVQG). Positions 66-74 (TMDEKIRDI) are lipid binding. The tract at residues 78–101 (STAAVSTYAGIFTDQLLSMLKGDS) is lipoprotein lipase cofactor.

It belongs to the apolipoprotein C2 family. Post-translationally, proapolipoprotein C-II is synthesized as a sialic acid containing glycoprotein which is subsequently desialylated prior to its proteolytic processing. Proapolipoprotein C-II, the major form found in plasma undergoes proteolytic cleavage of its N-terminal hexapeptide to generate apolipoprotein C-II, which occurs as the minor form in plasma. As to expression, highly expressed in the liver. Moderately expressed in the ileum, jejunum and ovary.

The protein localises to the secreted. Functionally, component of chylomicrons, very low-density lipoproteins (VLDL), low-density lipoproteins (LDL), and high-density lipoproteins (HDL) in plasma. Plays an important role in lipoprotein metabolism as an activator of lipoprotein lipase. Both proapolipoprotein C-II and apolipoprotein C-II can activate lipoprotein lipase. The sequence is that of Apolipoprotein C-II (APOC2) from Canis lupus familiaris (Dog).